A 240-amino-acid chain; its full sequence is uncharacterized protein (240 aa).

This is an uncharacterized protein from Thermotoga maritima (strain ATCC 43589 / DSM 3109 / JCM 10099 / NBRC 100826 / MSB8).